The primary structure comprises 627 residues: Protein fem-1 homolog B (627 aa).

ANK repeat units lie at residues 45-74 (QRST…VQTQ), 87-116 (DGAT…NVNH), 120-149 (TNST…NISI), and 153-182 (YDNT…DPNA). Residues His-185, Cys-186, and His-218 each contribute to the Zn(2+) site. ANK repeat units lie at residues 186-215 (CGAT…AIVV) and 218-248 (HGMT…DRRS). Residues 344 to 377 (SHPIIYRGAVYADNMEFEQCIKLWLHALHLRQKG) form a TPR repeat. ANK repeat units follow at residues 483–527 (EGFS…EVNA) and 531–568 (EGNS…HTDM).

This sequence belongs to the fem-1 family. Component of a CRL2 E3 ubiquitin-protein ligase complex, also named ECS (Elongin BC-CUL2/5-SOCS-box protein) complex, composed of CUL2, Elongin BC (ELOB and ELOC), RBX1 and substrate-specific adapter FEM1B. Homooligomer. Interacts with PPM1F and PHTF1. Interacts with the death domain of FAS/TNFRSF6 and TNFRSF1A. Interacts with CHEK1. Interacts with NKX3-1. In terms of tissue distribution, expressed in pancreatic islets, within both beta cells and non-beta cells (at protein level). Highly expressed in adult testis; expressed in all types of spermatogonia. Also expressed in the prostate of neonatal mice.

Its subcellular location is the cytoplasm. The protein localises to the nucleus. Its pathway is protein modification; protein ubiquitination. With respect to regulation, activity of the CRL2(FEM1B) complex toward FNIP1 is inhibited by BEX family proteins (BEX1, BEX2, BEX3 and/or BEX4) in absence of reductive stress. Mechanistically, BEX proteins act as pseudosubstrate inhibitors that associate with FEM1B via zinc in absence of reductive stress, thereby preventing association between FEM1B and FNIP1. In terms of biological role, substrate-recognition component of a Cul2-RING (CRL2) E3 ubiquitin-protein ligase complex of the DesCEND (destruction via C-end degrons) pathway, which recognizes a C-degron located at the extreme C terminus of target proteins, leading to their ubiquitination and degradation. The C-degron recognized by the DesCEND pathway is usually a motif of less than ten residues and can be present in full-length proteins, truncated proteins or proteolytically cleaved forms. The CRL2(FEM1B) complex specifically recognizes proteins ending with -Gly-Leu-Asp-Arg, such as CDK5R1, leading to their ubiquitination and degradation. Also acts as a regulator of the reductive stress response by mediating ubiquitination of reduced FNIP1: in response to reductive stress, the CRL2(FEM1B) complex specifically recognizes a conserved Cys degron in FNIP1 when this degron is reduced, leading to FNIP1 degradation and subsequent activation of mitochondria to recalibrate reactive oxygen species (ROS). Mechanistically, recognizes and binds reduced FNIP1 through two interface zinc ions, which act as a molecular glue that recruit reduced FNIP1 to FEM1B. Promotes ubiquitination of GLI1, suppressing GLI1 transcriptional activator activity. Promotes ubiquitination and degradation of ANKRD37. Promotes ubiquitination and degradation of SLBP. Involved in apoptosis by acting as a death receptor-associated protein that mediates apoptosis. Also involved in glucose homeostasis in pancreatic islet. May also act as an adapter/mediator in replication stress-induced signaling that leads to the activation of CHEK1. This Mus musculus (Mouse) protein is Protein fem-1 homolog B.